We begin with the raw amino-acid sequence, 185 residues long: Ribosome-recycling factor (185 aa).

It belongs to the RRF family.

The protein resides in the cytoplasm. Functionally, responsible for the release of ribosomes from messenger RNA at the termination of protein biosynthesis. May increase the efficiency of translation by recycling ribosomes from one round of translation to another. This is Ribosome-recycling factor from Geobacter sp. (strain M21).